Here is a 2682-residue protein sequence, read N- to C-terminus: 3-methylorcinaldehyde synthase (2682 aa).

An N-terminal acylcarrier protein transacylase domain (SAT) region spans residues 111–272 (LIPLVVIEQL…TEITLYGAFH (162 aa)). Residue C154 is the Nucleophile; for transacylase activity of the active site. H272 (proton donor/acceptor; for transacylase activity) is an active-site residue. Residues 401 to 826 (ESDIAVIGMA…GSNASMIVMQ (426 aa)) enclose the Ketosynthase family 3 (KS3) domain. Catalysis depends on for beta-ketoacyl synthase activity residues C573, H708, and H749. The malonyl-CoA:ACP transacylase (MAT) domain stretch occupies residues 947–1237 (FGGQVSTHIG…ITAMTSRALD (291 aa)). Positions 1339 to 1468 (LTFVGFQDSS…GKIKFTNARD (130 aa)) are N-terminal hotdog fold. Positions 1339–1651 (LTFVGFQDSS…YVKIPKLSMQ (313 aa)) constitute a PKS/mFAS DH domain. Residues 1367–1649 (LLLGHMTIQT…IAYVKIPKLS (283 aa)) are product template (PT) domain. Catalysis depends on H1371, which acts as the Proton acceptor; for dehydratase activity. The tract at residues 1496–1651 (VDEVLANRSI…YVKIPKLSMQ (156 aa)) is C-terminal hotdog fold. Catalysis depends on D1555, which acts as the Proton donor; for dehydratase activity. The Carrier domain occupies 1723-1797 (ENITERVKAV…DLMKVVTGVV (75 aa)). The residue at position 1757 (S1757) is an O-(pantetheine 4'-phosphoryl)serine. Positions 2021-2211 (EWPLNQVMYT…AGYGHVYWTE (191 aa)) are methyltransferase domain. The NADPH-binding (R) domain stretch occupies residues 2303-2548 (VTGATGGLGA…LGWTPADAIA (246 aa)).

It participates in secondary metabolite biosynthesis; terpenoid biosynthesis. Its function is as follows. Non-reducing polyketide synthase; part of the gene cluster that mediates the biosynthesis of eupenifeldin, a bistropolone meroterpenoid that acts as an antitumor agent. The first step of eupenifeldin biosynthesis is the biosynthesis of 3-methylorcinaldehyde performed by the non-reducing polyketide synthase eupA. Oxidative dearomatization of 3-methylorcinaldehyde likely catalyzed by the FAD-dependent monooxygenase eupB is followed by oxidative ring expansion by the 2-oxoglutarate-dependent dioxygenase eupC to provide the first tropolone metabolite, tropolone stipitaldehyde. In parallel, generation of sesquiterpene alpha-humulene from farnesylpyrophosphate (FPP) is catalyzed by the terpene cyclase eupE. The cytochrome P450 monooxygenase eupD then hydroxylates humulene to humulenol. The putative Diels-Alderase eupF probably catalyzes the formation of the tropolone-humulene skeleton by linking humulenol and the polyketide moiety. The short-chain dehydrogenase/reductase eupG and the flavin-dependent monooxygenase eupH are also essential for eupenifeldin biosynthesis and are likely the additional decorating enzymes of the tropolone-humulene skeleton to produce final eupenifeldin or derivatives. This Phoma sp protein is 3-methylorcinaldehyde synthase.